Reading from the N-terminus, the 68-residue chain is Cytotoxic linear peptide (68 aa).

Positions 1–23 (MKTQFAILLIALVLFQMFSQSEA) are cleaved as a signal peptide. Leu36 is subject to Leucine amide. Residues 40–68 (GLNELDDLDELFDGEISQADIDFLKELMS) constitute a propeptide that is removed on maturation.

This sequence belongs to the non-disulfide-bridged peptide (NDBP) superfamily. Short antimicrobial peptide (group 4) family. As to expression, expressed by the venom gland.

It localises to the secreted. The protein localises to the target cell membrane. Functionally, amphipathic peptide that has antibacterial activities. The polypeptide is Cytotoxic linear peptide (Pandinus cavimanus (Tanzanian red clawed scorpion)).